We begin with the raw amino-acid sequence, 31 residues long: Sarcolipin (31 aa).

The Cytoplasmic portion of the chain corresponds to methionine 1–glutamate 7. Residues leucine 8–valine 26 traverse the membrane as a helical segment. Residues arginine 27–tyrosine 31 lie on the Lumenal side of the membrane.

This sequence belongs to the sarcolipin family. In terms of assembly, homooligomer. Can also form heterooligomers with other sarcoplasmic/endoplasmic reticulum calcium ATPase (SERCA) regulators ARLN, ERLN, PLN and STRIT1/DWORF. Monomer. Interacts with calcium ATPase ATP2A1/SERCA1. Interacts as a monomer with ATP2A2/SERCA2; the interaction decreases ATP2A2 Ca(2+) affinity. Interacts with VMP1; VMP1 competes with PLN and SLN to prevent them from forming an inhibitory complex with ATP2A2.

Its subcellular location is the sarcoplasmic reticulum membrane. It is found in the endoplasmic reticulum membrane. Functionally, reversibly inhibits the activity of ATP2A1/SERCA1 and ATP2A2/SERCA2 in sarcoplasmic reticulum by decreasing the apparent affinity of the ATPase for Ca(2+). Also inhibits the activity of ATP2A3/SERCA3. Modulates calcium re-uptake during muscle relaxation and plays an important role in calcium homeostasis in muscle. Required for muscle-based, non-shivering thermogenesis. This Rattus norvegicus (Rat) protein is Sarcolipin (Sln).